Consider the following 572-residue polypeptide: Glutamate--tRNA ligase (572 aa).

Residues 112–122 (PNPNGPPSLGN) carry the 'HIGH' region motif.

The protein belongs to the class-I aminoacyl-tRNA synthetase family. Glutamate--tRNA ligase type 2 subfamily.

It is found in the cytoplasm. It catalyses the reaction tRNA(Glu) + L-glutamate + ATP = L-glutamyl-tRNA(Glu) + AMP + diphosphate. In terms of biological role, catalyzes the attachment of glutamate to tRNA(Glu) in a two-step reaction: glutamate is first activated by ATP to form Glu-AMP and then transferred to the acceptor end of tRNA(Glu). In Methanocella arvoryzae (strain DSM 22066 / NBRC 105507 / MRE50), this protein is Glutamate--tRNA ligase.